Consider the following 612-residue polypeptide: Zinc metalloproteinase-disintegrin-like 2a (612 aa).

Residues 1 to 20 (MIQVLLVTICLAVFPYQGSS) form the signal peptide. Residues 21–189 (IILGSGNVND…KKASQLNLTP (169 aa)) constitute a propeptide that is removed on maturation. The region spanning 199 to 395 (KYIELVIVAD…NRPPCILNKP (197 aa)) is the Peptidase M12B domain. Glu202 serves as a coordination point for Ca(2+). N-linked (GlcNAc...) asparagine glycosylation is present at Asn218. Asp286 contacts Ca(2+). Disulfide bonds link Cys310–Cys390, Cys350–Cys374, and Cys352–Cys357. Position 335 (His335) interacts with Zn(2+). Residue Glu336 is part of the active site. 2 residues coordinate Zn(2+): His339 and His345. Positions 390, 393, 405, 408, 410, 412, 415, and 418 each coordinate Ca(2+). The Disintegrin domain occupies 403–489 (PPVCGNYFVE…DCPTDNFQRN (87 aa)). Cystine bridges form between Cys406–Cys435, Cys417–Cys430, Cys419–Cys425, Cys429–Cys452, Cys443–Cys449, Cys448–Cys474, Cys461–Cys481, Cys468–Cys500, Cys493–Cys505, Cys512–Cys562, Cys527–Cys573, Cys540–Cys550, Cys557–Cys599, and Cys593–Cys605. The D/ECD-tripeptide motif lies at 467-469 (ECD).

The protein belongs to the venom metalloproteinase (M12B) family. P-III subfamily. It depends on Zn(2+) as a cofactor. Expressed by the venom gland.

The protein localises to the secreted. Functionally, snake venom metalloproteinase that impairs hemostasis in the envenomed animal. The chain is Zinc metalloproteinase-disintegrin-like 2a from Crotalus adamanteus (Eastern diamondback rattlesnake).